The sequence spans 124 residues: KESAAAKFERQHMDPSASSISSSNYCNQMMQSRNLTQDRCKPVNTFVHESLADVQAVCFQKNVACKNGQSNCYQSNSAMHITDCRESGNSDYPNCVYKTTQAEKHIIVACEGNPYVPVHFDASV.

Positions 1–13 are enriched in basic and acidic residues; sequence KESAAAKFERQHM. The interval 1-23 is disordered; sequence KESAAAKFERQHMDPSASSISSS. Residues Lys-7 and Arg-10 each contribute to the substrate site. Residue His-12 is the Proton acceptor of the active site. 4 cysteine pairs are disulfide-bonded: Cys-26–Cys-84, Cys-40–Cys-95, Cys-58–Cys-110, and Cys-65–Cys-72. Asn-34 carries N-linked (GlcNAc...) asparagine glycosylation. Substrate-binding positions include 41-45, Lys-66, and Arg-85; that span reads KPVNT. The Proton donor role is filled by His-119.

Belongs to the pancreatic ribonuclease family. As to quaternary structure, monomer. Interacts with and forms tight 1:1 complexes with RNH1. Dimerization of two such complexes may occur. Interaction with RNH1 inhibits this protein. Pancreas.

It is found in the secreted. The enzyme catalyses an [RNA] containing cytidine + H2O = an [RNA]-3'-cytidine-3'-phosphate + a 5'-hydroxy-ribonucleotide-3'-[RNA].. The catalysed reaction is an [RNA] containing uridine + H2O = an [RNA]-3'-uridine-3'-phosphate + a 5'-hydroxy-ribonucleotide-3'-[RNA].. Endonuclease that catalyzes the cleavage of RNA on the 3' side of pyrimidine nucleotides. Acts on single-stranded and double-stranded RNA. In Alces alces alces (European moose), this protein is Ribonuclease pancreatic (RNASE1).